The chain runs to 223 residues: MAKHSHDHTHDHHDRPRRVRKPGEPLRIGVGGPVGSGKTALVAAICRQLRDELSLAVLTNDIYTTEDADFLRKHAVLPDSRIIAVQTGGCPHTAIRDDITANLDAIDDLIAAHDALDLILVESGGDNLTATFSSGLVDVQIFVIDVAGGDKVPRKGGPGVTFSDLLVVNKTDLAPLVGADLKVMARDAEAVRDGRPTVLQSLTEDPAATKVLDWVRSQLAAAG.

The interval 1 to 30 is disordered; sequence MAKHSHDHTHDHHDRPRRVRKPGEPLRIGV. GTP is bound at residue 32-39; that stretch reads GPVGSGKT.

The protein belongs to the SIMIBI class G3E GTPase family. UreG subfamily. Homodimer. UreD, UreF and UreG form a complex that acts as a GTP-hydrolysis-dependent molecular chaperone, activating the urease apoprotein by helping to assemble the nickel containing metallocenter of UreC. The UreE protein probably delivers the nickel.

Its subcellular location is the cytoplasm. Facilitates the functional incorporation of the urease nickel metallocenter. This process requires GTP hydrolysis, probably effectuated by UreG. The chain is Urease accessory protein UreG from Mycobacterium ulcerans (strain Agy99).